We begin with the raw amino-acid sequence, 325 residues long: Probable cell division protein WhiA (325 aa).

The segment at residues 280–313 is a DNA-binding region (H-T-H motif); that stretch reads SLKELGSMLKNPLGKSGVNHRLRKIDKIAEELRK.

Belongs to the WhiA family.

Its function is as follows. Involved in cell division and chromosome segregation. In Caldicellulosiruptor saccharolyticus (strain ATCC 43494 / DSM 8903 / Tp8T 6331), this protein is Probable cell division protein WhiA.